The primary structure comprises 46 residues: Alpha-1-antiproteinase (46 aa).

The residue at position 30 (Ser30) is a Phosphoserine.

Belongs to the serpin family. Post-translationally, N-glycosylated; contains bi- and triantennary glycans with a bisecting N-acetylglucosamine and fucose residue. As to expression, plasma.

It is found in the secreted. In Notamacropus eugenii (Tammar wallaby), this protein is Alpha-1-antiproteinase.